Reading from the N-terminus, the 276-residue chain is uncharacterized protein (276 aa).

Positions 20–137 constitute an AB hydrolase-1 domain; it reads PVLIFIPGAN…PPINTFLPDS (118 aa). The interval 57 to 76 is disordered; that stretch reads GESELTEPLPDSASNPDSDY.

Belongs to the AB hydrolase superfamily.

This is an uncharacterized protein from Staphylococcus aureus (strain N315).